The sequence spans 708 residues: Elongation factor G 1 (708 aa).

The tr-type G domain occupies 9–295 (AKVRNIGIMA…AVVRYLPTPL (287 aa)). Residues 18-25 (AHIDAGKT), 86-90 (DTPGH), and 140-143 (NKLD) each bind GTP.

It belongs to the TRAFAC class translation factor GTPase superfamily. Classic translation factor GTPase family. EF-G/EF-2 subfamily.

It localises to the cytoplasm. In terms of biological role, catalyzes the GTP-dependent ribosomal translocation step during translation elongation. During this step, the ribosome changes from the pre-translocational (PRE) to the post-translocational (POST) state as the newly formed A-site-bound peptidyl-tRNA and P-site-bound deacylated tRNA move to the P and E sites, respectively. Catalyzes the coordinated movement of the two tRNA molecules, the mRNA and conformational changes in the ribosome. This is Elongation factor G 1 (fusA) from Streptomyces coelicolor (strain ATCC BAA-471 / A3(2) / M145).